The chain runs to 284 residues: uncharacterized protein (284 aa).

This is an uncharacterized protein from Methanothermobacter thermautotrophicus (Methanobacterium thermoformicicum).